Reading from the N-terminus, the 154-residue chain is Transcriptional repressor NrdR (154 aa).

A zinc finger spans residues 3 to 34; the sequence is CPFCGNENTRVIDTRAAEDGFAIKRRRECENC. The ATP-cone domain occupies 49–139; the sequence is LIVVKKDGSK…VYRQFKDVNS (91 aa).

This sequence belongs to the NrdR family. The cofactor is Zn(2+).

In terms of biological role, negatively regulates transcription of bacterial ribonucleotide reductase nrd genes and operons by binding to NrdR-boxes. The sequence is that of Transcriptional repressor NrdR from Carboxydothermus hydrogenoformans (strain ATCC BAA-161 / DSM 6008 / Z-2901).